The primary structure comprises 562 residues: Protoporphyrinogen oxidase 1, chloroplastic (562 aa).

The N-terminal 48 residues, Met1–Cys48, are a transit peptide targeting the chloroplast. FAD-binding positions include Gly88–Gly93, Glu115–Ala116, and Gly137–Ser140. A disordered region spans residues Thr274 to Gly302. Over residues Ile278–Leu293 the composition is skewed to basic and acidic residues. FAD-binding positions include Val323 and Val536–Leu538.

The protein belongs to the protoporphyrinogen/coproporphyrinogen oxidase family. Protoporphyrinogen oxidase subfamily. Requires FAD as cofactor.

It is found in the plastid. Its subcellular location is the chloroplast thylakoid membrane. The protein localises to the chloroplast inner membrane. The enzyme catalyses protoporphyrinogen IX + 3 O2 = protoporphyrin IX + 3 H2O2. It functions in the pathway porphyrin-containing compound metabolism; protoporphyrin-IX biosynthesis; protoporphyrin-IX from protoporphyrinogen-IX: step 1/1. Its pathway is porphyrin-containing compound metabolism; chlorophyll biosynthesis. Catalyzes the 6-electron oxidation of protoporphyrinogen-IX to form protoporphyrin-IX. In Spinacia oleracea (Spinach), this protein is Protoporphyrinogen oxidase 1, chloroplastic.